We begin with the raw amino-acid sequence, 673 residues long: Methionine--tRNA ligase (673 aa).

The short motif at 13-23 (PYANGSIHLGH) is the 'HIGH' region element. The Zn(2+) site is built by Cys-144, Cys-147, Cys-157, and Cys-160. The short motif at 330–334 (KMSKS) is the 'KMSKS' region element. Lys-333 is an ATP binding site. The 102-residue stretch at 572–673 (DFAQLDLRIA…GRARAGMTIS (102 aa)) folds into the tRNA-binding domain.

This sequence belongs to the class-I aminoacyl-tRNA synthetase family. MetG type 1 subfamily. In terms of assembly, homodimer. It depends on Zn(2+) as a cofactor.

It localises to the cytoplasm. The catalysed reaction is tRNA(Met) + L-methionine + ATP = L-methionyl-tRNA(Met) + AMP + diphosphate. Its function is as follows. Is required not only for elongation of protein synthesis but also for the initiation of all mRNA translation through initiator tRNA(fMet) aminoacylation. This Dichelobacter nodosus (strain VCS1703A) protein is Methionine--tRNA ligase.